We begin with the raw amino-acid sequence, 101 residues long: Large ribosomal subunit protein uL24c (101 aa).

This sequence belongs to the universal ribosomal protein uL24 family. Part of the 50S ribosomal subunit.

The protein localises to the plastid. It localises to the chloroplast. Functionally, one of two assembly initiator proteins, it binds directly to the 5'-end of the 23S rRNA, where it nucleates assembly of the 50S subunit. The sequence is that of Large ribosomal subunit protein uL24c (rpl24) from Guillardia theta (Cryptophyte).